The following is a 359-amino-acid chain: MDPEETSVYLDYYYATSPNPDIRETHSHVPYTSVFLPVFYTAVFLTGVLGNLVLMGALHFKPGSRRLIDIFIINLAASDFIFLVTLPLWVDKEASLGLWRTGSFLCKGSSYMISVNMHCSVFLLTCMSVDRYLAIVCPVVSRKFRRTDCAYVVCASIWFISCLLGLPTLLSRELTLIDDKPYCAEKKATPLKLIWSLVALIFTFFVPLLNIVTCYCCIARKLCAHYQQSGRHNKKLKKSIKIILIVVAAFLVSWLPFNTFKLLAIVSGLQERYFPSAMLQLGMEVSGPLAFANSCVNPFIYYIFDSYIRRAIVHCLCPCLKNYDFGSSTETSDSHLTKALSTFIHAEDFTRRRKRSVSL.

Residues 1–33 (MDPEETSVYLDYYYATSPNPDIRETHSHVPYTS) lie on the Extracellular side of the membrane. A helical membrane pass occupies residues 34–54 (VFLPVFYTAVFLTGVLGNLVL). At 55 to 69 (MGALHFKPGSRRLID) the chain is on the cytoplasmic side. The chain crosses the membrane as a helical span at residues 70-90 (IFIINLAASDFIFLVTLPLWV). The Extracellular portion of the chain corresponds to 91-120 (DKEASLGLWRTGSFLCKGSSYMISVNMHCS). Residues 121–141 (VFLLTCMSVDRYLAIVCPVVS) form a helical membrane-spanning segment. The Cytoplasmic portion of the chain corresponds to 142 to 149 (RKFRRTDC). A helical transmembrane segment spans residues 150 to 170 (AYVVCASIWFISCLLGLPTLL). Topologically, residues 171–192 (SRELTLIDDKPYCAEKKATPLK) are extracellular. The chain crosses the membrane as a helical span at residues 193 to 213 (LIWSLVALIFTFFVPLLNIVT). Topologically, residues 214 to 239 (CYCCIARKLCAHYQQSGRHNKKLKKS) are cytoplasmic. The helical transmembrane segment at 240–260 (IKIILIVVAAFLVSWLPFNTF) threads the bilayer. At 261–283 (KLLAIVSGLQERYFPSAMLQLGM) the chain is on the extracellular side. A helical membrane pass occupies residues 284–304 (EVSGPLAFANSCVNPFIYYIF). Residues 305–359 (DSYIRRAIVHCLCPCLKNYDFGSSTETSDSHLTKALSTFIHAEDFTRRRKRSVSL) are Cytoplasmic-facing. Serine 358 is subject to Phosphoserine.

This sequence belongs to the G-protein coupled receptor 1 family. As to quaternary structure, interacts with adapter YWHAE; this interaction promotes ER-to-Golgi transport of GPR15. Phosphorylation is necessary for YWHAE binding and efficient surface expression. In terms of processing, O-glycosylated. Sialylated O-glycans in the N-terminal tail inhibits binding of GPR15LG. Post-translationally, sulfation is required for efficient binding of GPR15LG.

Its subcellular location is the cell membrane. G protein-coupled receptor that plays an important role in immune homeostasis. Acts via its natural ligand GPR15LG, a chemokine-like polypeptide strongly expressed in gastrointestinal tissues. GPR15-GPR15LG signaling axis regulates intestinal homeostasis and inflammation through the migration of immune cells. Controls thereby the specific homing of T-cells, particularly FOXP3+ regulatory T-cells (Tregs), to the large intestine lamina propria. Also required for skin localization of thymus-derived dendritic epidermal T-cells. Plays an important role in mediating cytoprotective function as well as angiogenesis of thrombomodulin. Mechanistically, preferentially signals through the Gi/o pathway to inhibit adenylate cyclase activity and activate a phosphatidylinositol-calcium second messenger system that regulates the release of Ca(2+) ions from intracellular stores. This chain is G-protein coupled receptor 15 (GPR15), found in Macaca fascicularis (Crab-eating macaque).